The sequence spans 533 residues: Drimenyl diphosphate synthase (533 aa).

Arg132, Lys133, Gln163, and Trp165 together coordinate (2E,6E)-farnesyl diphosphate. Glu169 is a Mg(2+) binding site. PFTB repeat units follow at residues 274–316 (VTPM…RRAA), 324–366 (VAEA…AHDP), 372–415 (VDEA…AAHG), 425–466 (AERA…ARGP), and 474–517 (LDRA…FVLL). Asp303 acts as the Proton donor in catalysis. Arg501 contacts (2E,6E)-farnesyl diphosphate.

This sequence belongs to the terpene cyclase/mutase family. Mg(2+) is required as a cofactor. Ni(2+) serves as cofactor. The cofactor is Co(2+).

It catalyses the reaction (2E,6E)-farnesyl diphosphate = (5S,9S,10S)-drim-7-en-11-yl diphosphate. In terms of biological role, catalyzes the cyclization of farnesyl diphosphate (FPP) to drimenyl diphosphate. Cannot use geranylgeranyl diphosphate (GGPP) as substrate. The chain is Drimenyl diphosphate synthase from Streptomyces showdoensis.